A 502-amino-acid chain; its full sequence is Zinc finger C3HC-type protein 1 (502 aa).

An N-acetylalanine modification is found at Ala2. A Phosphoserine modification is found at Ser24. The residue at position 28 (Thr28) is a Phosphothreonine. Residues 35 to 74 (LIDEGIAPEEGGVDAQDTSATSQSVNGSPQAEQPSLESTS) are disordered. Positions 50–72 (QDTSATSQSVNGSPQAEQPSLES) are enriched in polar residues. Phosphoserine occurs at positions 58 and 62. Thr84 bears the Phosphothreonine mark. A C3HC-type zinc finger spans residues 102 to 156 (CAKYGWVTVECDMLKCSSCQAFLCASLQPAFDFDRYKQRCAELKKALCTAHEKFC). The tract at residues 302 to 423 (SSPIPGLEGR…SSRSFFDPTS (122 aa)) is disordered. Ser321 and Ser329 each carry phosphoserine. Thr333 is subject to Phosphothreonine. Phosphoserine is present on residues Ser338, Ser344, Ser354, Ser359, and Ser370. The segment covering 351 to 360 (RTRSWDSSSP) has biased composition (polar residues). Residues 371–380 (PTTRTRPVTR) show a composition bias toward low complexity. Phosphoserine is present on Ser381. At Thr384 the chain carries Phosphothreonine. A Phosphoserine modification is found at Ser395. Residues 396–402 (PLRKAKR) carry the Nuclear localization signal motif. Phosphoserine occurs at positions 407 and 483. The span at 407–422 (SSSSSDTSSRSFFDPT) shows a compositional bias: low complexity.

As to quaternary structure, interacts with TPR; this interaction mediates ZC3HC1 nuclear envelopes (NE)-association but also required for proper positioning of a substantial amount of TPR at the nuclear basket (NB). Phosphorylated. May also be weakly phosphorylated on Tyr residues.

The protein localises to the nucleus. The protein resides in the nucleus envelope. Required for proper positioning of a substantial amount of TPR at the nuclear basket (NB) through interaction with TPR. This Pongo abelii (Sumatran orangutan) protein is Zinc finger C3HC-type protein 1 (ZC3HC1).